The primary structure comprises 436 residues: Glutamyl-tRNA reductase (436 aa).

Residues 52 to 55 (TCHR), Ser-105, 110 to 112 (EDQ), and Gln-116 each bind substrate. Cys-53 (nucleophile) is an active-site residue. Residue 184–189 (GAGEMG) coordinates NADP(+).

It belongs to the glutamyl-tRNA reductase family. Homodimer.

The enzyme catalyses (S)-4-amino-5-oxopentanoate + tRNA(Glu) + NADP(+) = L-glutamyl-tRNA(Glu) + NADPH + H(+). Its pathway is porphyrin-containing compound metabolism; protoporphyrin-IX biosynthesis; 5-aminolevulinate from L-glutamyl-tRNA(Glu): step 1/2. In terms of biological role, catalyzes the NADPH-dependent reduction of glutamyl-tRNA(Glu) to glutamate 1-semialdehyde (GSA). The sequence is that of Glutamyl-tRNA reductase from Halobacterium salinarum (strain ATCC 29341 / DSM 671 / R1).